The primary structure comprises 387 residues: Phosphoglycerate kinase (387 aa).

Substrate contacts are provided by residues 21-23 (DLN), R36, 59-62 (HLGR), R113, and R146. Residues K197, E314, and 340 to 343 (GGDT) contribute to the ATP site.

This sequence belongs to the phosphoglycerate kinase family. Monomer.

It is found in the cytoplasm. It catalyses the reaction (2R)-3-phosphoglycerate + ATP = (2R)-3-phospho-glyceroyl phosphate + ADP. It participates in carbohydrate degradation; glycolysis; pyruvate from D-glyceraldehyde 3-phosphate: step 2/5. This is Phosphoglycerate kinase from Salmonella schwarzengrund (strain CVM19633).